A 379-amino-acid polypeptide reads, in one-letter code: Protein-glutamate methylesterase/protein-glutamine glutaminase (379 aa).

The Response regulatory domain occupies 4 to 121 (KVLVVDDSSF…AKNSDEAGSL (118 aa)). At Asp-55 the chain carries 4-aspartylphosphate. Positions 185-379 (SGKEYKLLAI…ASMVKEISRG (195 aa)) constitute a CheB-type methylesterase domain. Catalysis depends on residues Ser-197, His-224, and Asp-321.

Belongs to the CheB family. In terms of processing, phosphorylated by CheA. Phosphorylation of the N-terminal regulatory domain activates the methylesterase activity.

The protein localises to the cytoplasm. It catalyses the reaction [protein]-L-glutamate 5-O-methyl ester + H2O = L-glutamyl-[protein] + methanol + H(+). The catalysed reaction is L-glutaminyl-[protein] + H2O = L-glutamyl-[protein] + NH4(+). In terms of biological role, involved in chemotaxis. Part of a chemotaxis signal transduction system that modulates chemotaxis in response to various stimuli. Catalyzes the demethylation of specific methylglutamate residues introduced into the chemoreceptors (methyl-accepting chemotaxis proteins or MCP) by CheR. Also mediates the irreversible deamidation of specific glutamine residues to glutamic acid. The polypeptide is Protein-glutamate methylesterase/protein-glutamine glutaminase (Colwellia psychrerythraea (strain 34H / ATCC BAA-681) (Vibrio psychroerythus)).